The primary structure comprises 884 residues: DNA primase (884 aa).

A CHC2-type zinc finger spans residues Cys-825–Cys-864.

This sequence belongs to the herpesviridae DNA primase family. Associates with the helicase and the primase-associated factor to form the helicase-primase factor.

The protein resides in the host nucleus. Its function is as follows. Essential component of the helicase/primase complex. Unwinds the DNA at the replication forks and generates single-stranded DNA for both leading and lagging strand synthesis. The primase initiates primer synthesis and thereby produces large amount of short RNA primers on the lagging strand that the polymerase elongates using dNTPs. The protein is DNA primase (56) of Equine herpesvirus 2 (strain 86/87) (EHV-2).